Here is a 504-residue protein sequence, read N- to C-terminus: Ribose import ATP-binding protein RbsA (504 aa).

ABC transporter domains are found at residues 6–242 (LELN…VGRR) and 250–495 (IDVQ…VGKT). Residue 38-45 (GENGAGKS) participates in ATP binding.

It belongs to the ABC transporter superfamily. Ribose importer (TC 3.A.1.2.1) family. As to quaternary structure, the complex is composed of an ATP-binding protein (RbsA), two transmembrane proteins (RbsC) and a solute-binding protein (RbsB).

Its subcellular location is the cell inner membrane. It catalyses the reaction D-ribose(out) + ATP + H2O = D-ribose(in) + ADP + phosphate + H(+). In terms of biological role, part of the ABC transporter complex RbsABC involved in ribose import. Responsible for energy coupling to the transport system. The chain is Ribose import ATP-binding protein RbsA from Aliivibrio fischeri (strain ATCC 700601 / ES114) (Vibrio fischeri).